The primary structure comprises 87 residues: Neurotoxin Cex4 (87 aa).

An N-terminal signal peptide occupies residues 1–19; the sequence is MNSLLMITACLFLIGTVWA. The 66-residue stretch at 20 to 85 folds into the LCN-type CS-alpha/beta domain; the sequence is KEGYLVNKST…TYPLPNKSCG (66 aa). Disulfide bonds link cysteine 31–cysteine 84, cysteine 35–cysteine 60, cysteine 44–cysteine 65, and cysteine 48–cysteine 67. Residue cysteine 84 is modified to Cysteine amide. Positions 85–87 are excised as a propeptide; the sequence is GRK.

This sequence belongs to the long (4 C-C) scorpion toxin superfamily. Sodium channel inhibitor family. Beta subfamily. In terms of tissue distribution, expressed by the venom gland.

It is found in the secreted. In terms of biological role, beta toxins bind voltage-independently at site-4 of sodium channels (Nav) and shift the voltage of activation toward more negative potentials thereby affecting sodium channel activation and promoting spontaneous and repetitive firing. This Centruroides exilicauda (Bark scorpion) protein is Neurotoxin Cex4.